The primary structure comprises 590 residues: DNA primase (590 aa).

The CHC2-type zinc-finger motif lies at cysteine 37–cysteine 61. Residues lysine 253–proline 333 form the Toprim domain. Mg(2+)-binding residues include glutamate 259, aspartate 304, and aspartate 306.

It belongs to the DnaG primase family. Monomer. Interacts with DnaB. Zn(2+) is required as a cofactor. It depends on Mg(2+) as a cofactor.

The enzyme catalyses ssDNA + n NTP = ssDNA/pppN(pN)n-1 hybrid + (n-1) diphosphate.. In terms of biological role, RNA polymerase that catalyzes the synthesis of short RNA molecules used as primers for DNA polymerase during DNA replication. The chain is DNA primase from Chlamydia pneumoniae (Chlamydophila pneumoniae).